The following is a 469-amino-acid chain: Cysteine--tRNA ligase (469 aa).

C28 is a binding site for Zn(2+). The 'HIGH' region signature appears at 30-40; that stretch reads PTVYNYIHIGN. Zn(2+) is bound by residues C213, H238, and E242. The 'KMSKS' region signature appears at 270–274; it reads KMSKS. K273 serves as a coordination point for ATP.

The protein belongs to the class-I aminoacyl-tRNA synthetase family. In terms of assembly, monomer. Requires Zn(2+) as cofactor.

The protein localises to the cytoplasm. It catalyses the reaction tRNA(Cys) + L-cysteine + ATP = L-cysteinyl-tRNA(Cys) + AMP + diphosphate. The chain is Cysteine--tRNA ligase from Leuconostoc citreum (strain KM20).